Reading from the N-terminus, the 125-residue chain is Small ribosomal subunit protein eS8 (125 aa).

The protein belongs to the eukaryotic ribosomal protein eS8 family. Part of the 30S ribosomal subunit.

This is Small ribosomal subunit protein eS8 from Methanosphaerula palustris (strain ATCC BAA-1556 / DSM 19958 / E1-9c).